Here is a 223-residue protein sequence, read N- to C-terminus: Sporulation-specific protein 19 (223 aa).

Positions 1 to 20 (MKKQILIVAAQSILCSTVFG) are cleaved as a signal peptide. Asn-198 carries GPI-anchor amidated asparagine lipidation. The propeptide at 199 to 223 (ASNFLTPTTVALAVLLTILLFIQAY) is removed in mature form.

The GPI-anchor is attached to the protein in the endoplasmic reticulum and serves to target the protein to the cell surface. There, the glucosamine-inositol phospholipid moiety is cleaved off and the GPI-modified mannoprotein is covalently attached via its lipidless GPI glycan remnant to the 1,6-beta-glucan of the outer cell wall layer.

The protein resides in the secreted. It is found in the cell wall. It localises to the membrane. In terms of biological role, involved in sporulation. Essential for completion of the nuclear division. This Saccharomyces cerevisiae (strain ATCC 204508 / S288c) (Baker's yeast) protein is Sporulation-specific protein 19 (SPO19).